A 266-amino-acid chain; its full sequence is Tryptophan synthase alpha chain (266 aa).

Active-site proton acceptor residues include Glu49 and Asp60.

It belongs to the TrpA family. Tetramer of two alpha and two beta chains.

The catalysed reaction is (1S,2R)-1-C-(indol-3-yl)glycerol 3-phosphate + L-serine = D-glyceraldehyde 3-phosphate + L-tryptophan + H2O. Its pathway is amino-acid biosynthesis; L-tryptophan biosynthesis; L-tryptophan from chorismate: step 5/5. The alpha subunit is responsible for the aldol cleavage of indoleglycerol phosphate to indole and glyceraldehyde 3-phosphate. In Synechococcus elongatus (strain ATCC 33912 / PCC 7942 / FACHB-805) (Anacystis nidulans R2), this protein is Tryptophan synthase alpha chain.